We begin with the raw amino-acid sequence, 152 residues long: Nucleoside diphosphate kinase B (152 aa).

An interaction with AKAP13 region spans residues 1–66; sequence MANLERTFIA…DRPFFPGLVK (66 aa). Residues Lys-12, Phe-60, Arg-88, Thr-94, Arg-105, and Asn-115 each coordinate ATP. Residue His-118 is the Pros-phosphohistidine intermediate of the active site.

The protein belongs to the NDK family. In terms of assembly, hexamer of two different chains: An and B (A6, A5B, A4B2, A3B3, A2B4, AB5, B6). Interacts with CAPN8. Interacts with AKAP13. Interacts with ITGB1BP1 (via C-terminal domain region). Interacts with BCL2L10. Requires Mg(2+) as cofactor. Expressed in the base region of the oxyntic and pyloric mucosae.

The protein localises to the cytoplasm. It is found in the cell projection. It localises to the lamellipodium. Its subcellular location is the ruffle. The protein resides in the nucleus. The enzyme catalyses a 2'-deoxyribonucleoside 5'-diphosphate + ATP = a 2'-deoxyribonucleoside 5'-triphosphate + ADP. It carries out the reaction a ribonucleoside 5'-diphosphate + ATP = a ribonucleoside 5'-triphosphate + ADP. It catalyses the reaction ATP + protein L-histidine = ADP + protein N-phospho-L-histidine.. In terms of biological role, major role in the synthesis of nucleoside triphosphates other than ATP. The ATP gamma phosphate is transferred to the NDP beta phosphate via a ping-pong mechanism, using a phosphorylated active-site intermediate. Negatively regulates Rho activity by interacting with AKAP13/LBC. Acts as a transcriptional activator of the MYC gene; binds DNA non-specifically. Binds to both single-stranded guanine- and cytosine-rich strands within the nuclease hypersensitive element (NHE) III(1) region of the MYC gene promoter. Does not bind to duplex NHE III(1). Has G-quadruplex (G4) DNA-binding activity, which is independent of its nucleotide-binding and kinase activity. Binds both folded and unfolded G4 with similar low nanomolar affinities. Stabilizes folded G4s regardless of whether they are prefolded or not. Exhibits histidine protein kinase activity. This Mus musculus (Mouse) protein is Nucleoside diphosphate kinase B (Nme2).